The following is a 660-amino-acid chain: DNA ligase (660 aa).

NAD(+) contacts are provided by residues 33 to 37 (DFVYD), 82 to 83 (SL), and glutamate 110. The N6-AMP-lysine intermediate role is filled by lysine 112. Residues arginine 133, glutamate 167, lysine 281, and lysine 305 each coordinate NAD(+). Positions 396, 399, 412, and 417 each coordinate Zn(2+). A BRCT domain is found at 583–660 (GENKLLAGKK…SFEDIKSYLD (78 aa)).

Belongs to the NAD-dependent DNA ligase family. LigA subfamily. It depends on Mg(2+) as a cofactor. Requires Mn(2+) as cofactor.

It catalyses the reaction NAD(+) + (deoxyribonucleotide)n-3'-hydroxyl + 5'-phospho-(deoxyribonucleotide)m = (deoxyribonucleotide)n+m + AMP + beta-nicotinamide D-nucleotide.. Functionally, DNA ligase that catalyzes the formation of phosphodiester linkages between 5'-phosphoryl and 3'-hydroxyl groups in double-stranded DNA using NAD as a coenzyme and as the energy source for the reaction. It is essential for DNA replication and repair of damaged DNA. The chain is DNA ligase from Borreliella burgdorferi (strain ATCC 35210 / DSM 4680 / CIP 102532 / B31) (Borrelia burgdorferi).